A 569-amino-acid chain; its full sequence is 4-hydroxy-7-methoxy-3-oxo-3,4-dihydro-2H-1,4-benzoxazin-2-yl glucoside beta-D-glucosidase 1a, chloroplastic (569 aa).

The N-terminal 50 residues, 1-50, are a transit peptide targeting the chloroplast; that stretch reads MALLAAATLNPTTHLSLRSRAGRNSENLWLRSAASSQKSKGRFCNLTIRA. Residues Gln-92, His-194, and 239–240 contribute to the a beta-D-glucoside site; that span reads NE. The Proton donor role is filled by Glu-240. An intrachain disulfide couples Cys-259 to Cys-265. Residues Tyr-383, Glu-456, Trp-504, 511 to 512, and Phe-520 contribute to the a beta-D-glucoside site; that span reads EW. Glu-456 (nucleophile) is an active-site residue.

This sequence belongs to the glycosyl hydrolase 1 family. Homo- and heterohexamers. In terms of tissue distribution, expressed in young seedlings early after germination.

It is found in the plastid. Its subcellular location is the chloroplast. It catalyses the reaction Hydrolysis of terminal, non-reducing beta-D-glucosyl residues with release of beta-D-glucose.. It carries out the reaction DIMBOA beta-D-glucoside + H2O = DIMBOA + D-glucose. The catalysed reaction is DIBOA beta-D-glucoside + H2O = DIBOA + D-glucose. Its function is as follows. Acts in defense of young plant parts against pests via the production of hydroxamic acids from hydroxamic acid glucosides. Enzymatic activity is highly correlated with plant growth. The preferred substrate is DIMBOA-beta-D-glucoside. The protein is 4-hydroxy-7-methoxy-3-oxo-3,4-dihydro-2H-1,4-benzoxazin-2-yl glucoside beta-D-glucosidase 1a, chloroplastic (GLU1A) of Triticum aestivum (Wheat).